Here is a 953-residue protein sequence, read N- to C-terminus: Scaffold attachment factor B2 (953 aa).

A disordered region spans residues 1–29 (MAETLPGSGDSGPGTASLGPGVAETGTRR). Residue Ala2 is modified to N-acetylalanine. The SAP domain maps to 30–64 (LSELRVIDLRAELKKRNLDTGGNKSVLMERLKKAV). Ser54 carries the phosphoserine modification. Residue Lys65 forms a Glycyl lysine isopeptide (Lys-Gly) (interchain with G-Cter in SUMO1); alternate linkage. Residue Lys65 forms a Glycyl lysine isopeptide (Lys-Gly) (interchain with G-Cter in SUMO2); alternate linkage. The interval 91–114 (KGLKMEEEGTEDNGLEDDSRDGQE) is disordered. Residue Lys94 forms a Glycyl lysine isopeptide (Lys-Gly) (interchain with G-Cter in SUMO2) linkage. The span at 98-114 (EGTEDNGLEDDSRDGQE) shows a compositional bias: acidic residues. 2 positions are modified to phosphoserine: Ser109 and Ser158. Residues Lys188 and Lys199 each participate in a glycyl lysine isopeptide (Lys-Gly) (interchain with G-Cter in SUMO2) cross-link. Thr201 is subject to Phosphothreonine. Position 207 is a phosphoserine (Ser207). The disordered stretch occupies residues 219–404 (ILGETCKSEP…KDEKGRVGSG (186 aa)). Over residues 224-233 (CKSEPVKEES) the composition is skewed to basic and acidic residues. Lys230 participates in a covalent cross-link: Glycyl lysine isopeptide (Lys-Gly) (interchain with G-Cter in SUMO). Residues 274-285 (SESTAHAQSSKA) are compositionally biased toward polar residues. Basic and acidic residues predominate over residues 292–308 (VKREPAEQPGDGERTDC). Residue Lys293 forms a Glycyl lysine isopeptide (Lys-Gly) (interchain with G-Cter in SUMO) linkage. The span at 318-329 (EQSSAASELAEA) shows a compositional bias: low complexity. A compositionally biased stretch (basic and acidic residues) spans 345–358 (EARDSKEDGRKFDF). Residues 370-382 (ESSTSEGADQKMS) show a composition bias toward polar residues. Glycyl lysine isopeptide (Lys-Gly) (interchain with G-Cter in SUMO2) cross-links involve residues Lys380, Lys385, Lys388, Lys391, and Lys395. Residues 383-400 (SFKEEKDIKPIIKDEKGR) show a composition bias toward basic and acidic residues. The RRM domain occupies 407-485 (RNLWVSGLSS…RMISVEKAKN (79 aa)). 2 positions are modified to phosphoserine: Ser507 and Ser513. Glycyl lysine isopeptide (Lys-Gly) (interchain with G-Cter in SUMO2) cross-links involve residues Lys517, Lys524, Lys525, Lys541, Lys542, and Lys551. Residues 525-551 (KEEKIEKKEEKKPEDIKKEEKDQDELK) are compositionally biased toward basic and acidic residues. Disordered stretches follow at residues 525-665 (KEEK…RLQR) and 684-953 (RERL…TRRY). Over residues 555 to 564 (TNRSRVTKSG) the composition is skewed to polar residues. Over residues 567–579 (GMERTVVMDKSKG) the composition is skewed to basic and acidic residues. Residues Lys578, Lys586, and Lys608 each participate in a glycyl lysine isopeptide (Lys-Gly) (interchain with G-Cter in SUMO2) cross-link. Basic and acidic residues-rich tracts occupy residues 590–665 (RSKE…RLQR) and 684–820 (RERL…DSRD). The tract at residues 600 to 953 (DRKSESKEKR…PPYPHFTRRY (354 aa)) is interaction with SAFB1. Lys616 is covalently cross-linked (Glycyl lysine isopeptide (Lys-Gly) (interchain with G-Cter in SUMO2); alternate). Position 616 is an N6-acetyllysine; alternate (Lys616). The short motif at 713–730 (RRQQEQLRYEQERRPGRR) is the Nuclear localization signal element. Ser787 and Ser832 each carry phosphoserine. The segment covering 843–859 (GGRDWGEHNQRLEEHQA) has biased composition (basic and acidic residues). Residues 881 to 890 (GERGLSGPSG) show a composition bias toward gly residues. Ser886 carries the phosphoserine modification. Residues Arg897 and Arg903 each carry the omega-N-methylarginine modification. Gly residues predominate over residues 899-927 (GVAGRGGFAQGGHSQGHVVPGGGLEGGGV).

As to quaternary structure, interacts with SAFB/SAFB1 and SCAM1. Interacts with isoform 2 SRPK1 and inhibits its activity. In terms of tissue distribution, expressed at high levels in the CNS and at low levels in the liver. Expressed in a wide number of breast cancer cell lines.

It is found in the cytoplasm. The protein resides in the nucleus. Its function is as follows. Binds to scaffold/matrix attachment region (S/MAR) DNA. Can function as an estrogen receptor corepressor and can also inhibit cell proliferation. The protein is Scaffold attachment factor B2 (SAFB2) of Homo sapiens (Human).